Here is a 345-residue protein sequence, read N- to C-terminus: S-adenosylmethionine:tRNA ribosyltransferase-isomerase (345 aa).

This sequence belongs to the QueA family. Monomer.

It localises to the cytoplasm. The catalysed reaction is 7-aminomethyl-7-carbaguanosine(34) in tRNA + S-adenosyl-L-methionine = epoxyqueuosine(34) in tRNA + adenine + L-methionine + 2 H(+). It functions in the pathway tRNA modification; tRNA-queuosine biosynthesis. Functionally, transfers and isomerizes the ribose moiety from AdoMet to the 7-aminomethyl group of 7-deazaguanine (preQ1-tRNA) to give epoxyqueuosine (oQ-tRNA). The sequence is that of S-adenosylmethionine:tRNA ribosyltransferase-isomerase from Acidithiobacillus ferrooxidans (strain ATCC 53993 / BNL-5-31) (Leptospirillum ferrooxidans (ATCC 53993)).